Here is a 288-residue protein sequence, read N- to C-terminus: RanBP2-type zinc finger protein At1g67325 (288 aa).

Polar residues predominate over residues 1–11 (MSQVDNRNSSA). 5 disordered regions span residues 1 to 24 (MSQVDNRNSSAAKRARTDGGRRED), 52 to 77 (PADHNGKSAPKPMQHQQGFSSPGAYL), 176 to 198 (MPRPRFYPDEKSQKRDSTRDNDW), 222 to 248 (PKPGSQQGGSSDKISKQNAPEGSWKCD), and 265 to 288 (NCGADKPGDRSNGSPSRAPEENDQ). Positions 15–24 (ARTDGGRRED) are enriched in basic and acidic residues. RanBP2-type zinc fingers lie at residues 22 to 53 (REDDWICPSCGNVNFSFRTTCNMRNCTQPRPA), 194 to 225 (RDNDWTCPNCGNVNFSFRTVCNMRKCNTPKPG), and 241 to 272 (PEGSWKCDNCGNINYPFRSKCNRQNCGADKPG). Basic and acidic residues predominate over residues 181 to 197 (FYPDEKSQKRDSTRDND). Over residues 223 to 241 (KPGSQQGGSSDKISKQNAP) the composition is skewed to polar residues. Phosphoserine is present on S278.

The polypeptide is RanBP2-type zinc finger protein At1g67325 (Arabidopsis thaliana (Mouse-ear cress)).